The chain runs to 179 residues: Large ribosomal subunit protein uL5 (179 aa).

It belongs to the universal ribosomal protein uL5 family. In terms of assembly, part of the 50S ribosomal subunit; part of the 5S rRNA/L5/L18/L25 subcomplex. Contacts the 5S rRNA and the P site tRNA. Forms a bridge to the 30S subunit in the 70S ribosome.

Its function is as follows. This is one of the proteins that bind and probably mediate the attachment of the 5S RNA into the large ribosomal subunit, where it forms part of the central protuberance. In the 70S ribosome it contacts protein S13 of the 30S subunit (bridge B1b), connecting the 2 subunits; this bridge is implicated in subunit movement. Contacts the P site tRNA; the 5S rRNA and some of its associated proteins might help stabilize positioning of ribosome-bound tRNAs. This chain is Large ribosomal subunit protein uL5, found in Proteus mirabilis (strain HI4320).